Here is a 353-residue protein sequence, read N- to C-terminus: Photosystem II protein D1 (353 aa).

Thr2 is modified (N-acetylthreonine). Thr2 is modified (phosphothreonine). Helical transmembrane passes span 29 to 46, 118 to 133, and 142 to 156; these read YIGW…TATS, HFLL…EWEL, and WIAV…AAAA. Residue His118 coordinates chlorophyll a. Pheophytin a is bound at residue Tyr126. [CaMn4O5] cluster-binding residues include Asp170 and Glu189. A helical membrane pass occupies residues 197–218; that stretch reads FHMLGVAGVFGGSLFSAMHGSL. Position 198 (His198) interacts with chlorophyll a. A quinone-binding positions include His215 and 264–265; that span reads SF. Residue His215 coordinates Fe cation. Residue His272 participates in Fe cation binding. The helical transmembrane segment at 274 to 288 threads the bilayer; it reads FLAAWPVVGIWFTAL. Residues His332, Glu333, Asp342, and Ala344 each contribute to the [CaMn4O5] cluster site. Residues 345 to 353 constitute a propeptide that is removed on maturation; sequence SVEAPSVKA.

This sequence belongs to the reaction center PufL/M/PsbA/D family. As to quaternary structure, PSII is composed of 1 copy each of membrane proteins PsbA, PsbB, PsbC, PsbD, PsbE, PsbF, PsbH, PsbI, PsbJ, PsbK, PsbL, PsbM, PsbT, PsbX, PsbY, PsbZ, Psb30/Ycf12, at least 3 peripheral proteins of the oxygen-evolving complex and a large number of cofactors. It forms dimeric complexes. The D1/D2 heterodimer binds P680, chlorophylls that are the primary electron donor of PSII, and subsequent electron acceptors. It shares a non-heme iron and each subunit binds pheophytin, quinone, additional chlorophylls, carotenoids and lipids. D1 provides most of the ligands for the Mn4-Ca-O5 cluster of the oxygen-evolving complex (OEC). There is also a Cl(-1) ion associated with D1 and D2, which is required for oxygen evolution. The PSII complex binds additional chlorophylls, carotenoids and specific lipids. serves as cofactor. In terms of processing, tyr-161 forms a radical intermediate that is referred to as redox-active TyrZ, YZ or Y-Z. C-terminally processed by CTPA; processing is essential to allow assembly of the oxygen-evolving complex and thus photosynthetic growth.

The protein localises to the plastid. Its subcellular location is the chloroplast thylakoid membrane. It catalyses the reaction 2 a plastoquinone + 4 hnu + 2 H2O = 2 a plastoquinol + O2. Photosystem II (PSII) is a light-driven water:plastoquinone oxidoreductase that uses light energy to abstract electrons from H(2)O, generating O(2) and a proton gradient subsequently used for ATP formation. It consists of a core antenna complex that captures photons, and an electron transfer chain that converts photonic excitation into a charge separation. The D1/D2 (PsbA/PsbD) reaction center heterodimer binds P680, the primary electron donor of PSII as well as several subsequent electron acceptors. In Angiopteris evecta (Mule's foot fern), this protein is Photosystem II protein D1.